An 860-amino-acid polypeptide reads, in one-letter code: MEIGTTGAVGAAPQFSVPRRPGYGTMGKPIKLLANCFQVDIPKMDVYLYDVDIKPEKCPRRVNREVVDSMVQHFKVTIFGDRRPVYDGKKSLYTAQPLPVASAGVDLDVTLPGEGGKDRIFKVTIKFVSLVSWHMLHEVLTGRSTPDPLELDKPISTNPVHAVDVVLRHLPSMRYTPVGRSFFSSPEGYDHPLGGGREVWFGFHQSVRPAMWKMMLNIDVSATAFYKAQPVIQFMCEVLDIHNIDEQPRPLTDSHRVKFTKEIKGLKVEVTHCGTMRRKYRVCNVTRRPASHQTFPLQLENGQTVERTVAQYFREKYNLQLKYPHLPCLQVGQEQKHTYLPLEVCNIVAGQRCIKKLTDNQTSTMIKATARSAPDRQEEISRLVRSANYNSDPFVQEFQFRVRDEMAEVTGRVLPAPMLQYGGRNRTVATPSHGVWDMRGKQFHTGVEIKMWAIACFATQRQCREEVLKGFTDQLRKISKDAGMPIQGQPCFCKYAQGADNVEPMFRHLKNTYAGLQLIIVILPGKTPVYAEVKRVGDTLLGMATQCVQVKNVVKTSPQTLSNLCLKINVKLGGINNILVPHQRPSVFQQPVIFLGADVTHPPAGDGKKPSIAAVVGSMDAHPSRYCATVRVQRPRQEVIQDLASMVRELLIQFYKSTHYKPTRIIFYRDGVSEGQFRQVLYYELLAIREACISLEKEYQPGITYIVVQKRHHTRLFCADRAERVGRSGNIPAGTTVDTDITHPYEFDFYLCSHAGIQGTSRPSHYYVLWDDNCFTADEFQLLTYQLCHTYVRCTRSVSIPAPAYYAHLVAFRARYHLVDKEHDSAEGSHVSGQSNGRDPQALAKAVQIHHDTLRTMYFA.

A PAZ domain is found at 230-349 (PVIQFMCEVL…LPLEVCNIVA (120 aa)). The Piwi domain maps to 518–819 (LIIVILPGKT…VAFRARYHLV (302 aa)). An interaction with guide RNA region spans residues 530-567 (YAEVKRVGDTLLGMATQCVQVKNVVKTSPQTLSNLCLK). Residues aspartate 598, glutamate 638, and aspartate 670 each contribute to the a divalent metal cation site. Residues 758 to 805 (QGTSRPSHYYVLWDDNCFTADEFQLLTYQLCHTYVRCTRSVSIPAPAY) are interaction with guide RNA. Histidine 808 contacts a divalent metal cation.

It belongs to the argonaute family. Ago subfamily.

The protein resides in the cytoplasm. It localises to the P-body. It catalyses the reaction Endonucleolytic cleavage to 5'-phosphomonoester.. Functionally, required for RNA-mediated gene silencing (RNAi). Binds to short RNAs such as microRNAs (miRNAs) and represses the translation of mRNAs which are complementary to them. Possesses RNA slicer activity but only on select RNAs bearing 5'- and 3'-flanking sequences to the region of guide-target complementarity. The protein is Protein argonaute-3 (ago3) of Danio rerio (Zebrafish).